A 125-amino-acid polypeptide reads, in one-letter code: Acyl carrier protein, mitochondrial (125 aa).

The N-terminal 36 residues, 1-36, are a transit peptide targeting the mitochondrion; that stretch reads MFRSVCRISSRVAPSAYRTIMGRSVMSNTILAQRFY. Residues 43–122 enclose the Carrier domain; that stretch reads DQVSQRVIDV…ETVDYIASNP (80 aa). Serine 82 is subject to O-(pantetheine 4'-phosphoryl)serine.

The protein belongs to the acyl carrier protein (ACP) family. As to quaternary structure, complex I is composed of about 30 different subunits. Post-translationally, 4'-phosphopantetheine is transferred from CoA to a specific serine of apo-ACP by acpS. This modification is essential for activity because fatty acids are bound in thioester linkage to the sulfhydryl of the prosthetic group.

It is found in the mitochondrion. The protein operates within lipid metabolism; fatty acid biosynthesis. Carrier of the growing fatty acid chain in fatty acid biosynthesis. May be involved in the synthesis of very-long-chain fatty acids. Accessory and non-catalytic subunit of the mitochondrial membrane respiratory chain NADH dehydrogenase (Complex I), which functions in the transfer of electrons from NADH to the respiratory chain. This is Acyl carrier protein, mitochondrial (ACP1) from Saccharomyces cerevisiae (strain ATCC 204508 / S288c) (Baker's yeast).